The sequence spans 314 residues: Homoserine O-succinyltransferase (314 aa).

Residue cysteine 142 is the Acyl-thioester intermediate of the active site. Residues lysine 163 and serine 192 each coordinate substrate. Histidine 235 functions as the Proton acceptor in the catalytic mechanism. Glutamate 237 is a catalytic residue. Position 249 (arginine 249) interacts with substrate.

This sequence belongs to the MetA family.

It localises to the cytoplasm. The enzyme catalyses L-homoserine + succinyl-CoA = O-succinyl-L-homoserine + CoA. Its pathway is amino-acid biosynthesis; L-methionine biosynthesis via de novo pathway; O-succinyl-L-homoserine from L-homoserine: step 1/1. In terms of biological role, transfers a succinyl group from succinyl-CoA to L-homoserine, forming succinyl-L-homoserine. The chain is Homoserine O-succinyltransferase from Shewanella woodyi (strain ATCC 51908 / MS32).